A 483-amino-acid chain; its full sequence is Arginine/agmatine antiporter (483 aa).

12 consecutive transmembrane segments (helical) span residues 11-31, 41-61, 85-105, 124-144, 157-177, 208-228, 239-259, 289-309, 336-356, 364-384, 415-435, and 458-478; these read ILGTLALTGIVISSMIGGGIF, ASAGAVMLAWMLSGIGIFFIA, GFGPYVGFTIAWGYWLCQIFG, YFAGGNTIPAILLGSLLIWIF, FVNIIGAVCTLIPLLLFILIT, STMLVTLWAFIGIEGAVVISG, ATILGFSGCLLIYVLLSLLPF, VLMNTGLLIAVLTSWLSWTIL, PSFSLFMTSGLMQITMLLVYF, MLEITGVMVLPAYLTSSLFLV, LWLIYAGGLQHLFMVAILLAL, and EILKMTIVALAALLAIFLFSA.

This sequence belongs to the amino acid-polyamine-organocation (APC) superfamily. Basic amino acid/polyamine antiporter (APA) (TC 2.A.3.2) family.

The protein resides in the cell inner membrane. Its function is as follows. Catalyzes the exchange of L-arginine for agmatine. The arginine uptake by the bacterium in the macrophage may be a virulence factor against the host innate immune response. The sequence is that of Arginine/agmatine antiporter (aaxC) from Chlamydia trachomatis serovar A (strain ATCC VR-571B / DSM 19440 / HAR-13).